Consider the following 208-residue polypeptide: Large ribosomal subunit protein uL4 (208 aa).

Residues 47–58 are compositionally biased toward basic and acidic residues; sequence ARAARERSDVAR. The disordered stretch occupies residues 47–84; that stretch reads ARAARERSDVARTGKKFGRQKGGGTARHGDRRAPIFIG.

It belongs to the universal ribosomal protein uL4 family. Part of the 50S ribosomal subunit.

In terms of biological role, one of the primary rRNA binding proteins, this protein initially binds near the 5'-end of the 23S rRNA. It is important during the early stages of 50S assembly. It makes multiple contacts with different domains of the 23S rRNA in the assembled 50S subunit and ribosome. Functionally, forms part of the polypeptide exit tunnel. This chain is Large ribosomal subunit protein uL4, found in Sphingopyxis alaskensis (strain DSM 13593 / LMG 18877 / RB2256) (Sphingomonas alaskensis).